The chain runs to 446 residues: Keratin, type I cytoskeletal 25 (446 aa).

The interval 1–20 (MSLRLSSGSKRSYARPSTGS) is disordered. The head stretch occupies residues 1-74 (MSLRLSSGSK…VNEGGLLSGN (74 aa)). Residues 75–110 (EKVTMQNLNDRLASYLDNVQALQEANADLEQKIKGW) are coil 1A. Residues 75-390 (EKVTMQNLND…LLIGGDEGAC (316 aa)) enclose the IF rod domain. The linker 1 stretch occupies residues 111–132 (YEKFGPGSCRGLDHDYSRYFPI). The interval 133–224 (IDDLKNQIIT…KNHKEEMQAL (92 aa)) is coil 1B. Residues 225–247 (QCAAGGNVNVEMNAAPGVDLTVL) are linker 12. The tract at residues 248 to 386 (LNNMRAEYEA…ETYCLLIGGD (139 aa)) is coil 2. Positions 387–446 (EGACKSSSYKSKDYTSGNAGNQSKDSPKAIVVKKVLEEVDQRSKILTTRLHSLEEKSQSN) are tail. The tract at residues 394–413 (SYKSKDYTSGNAGNQSKDSP) is disordered. The span at 400–410 (YTSGNAGNQSK) shows a compositional bias: polar residues. Serine 438 carries the post-translational modification Phosphoserine.

It belongs to the intermediate filament family. In terms of assembly, heterodimer of a type I and a type II keratin. Heterodimer with type II keratin KRT5 leading to the formation of keratin intermediate filament (KIF) network. Interacts with KRT6A to form filaments.

The protein localises to the cytoplasm. Its function is as follows. Essential for the proper assembly of type I and type II keratin protein complexes and formation of keratin intermediate filaments in the inner root sheath (irs). Plays a role in the cytoskeleton organization. The polypeptide is Keratin, type I cytoskeletal 25 (Rattus norvegicus (Rat)).